A 103-amino-acid polypeptide reads, in one-letter code: Co-chaperonin GroES (103 aa).

It belongs to the GroES chaperonin family. In terms of assembly, heptamer of 7 subunits arranged in a ring. Interacts with the chaperonin GroEL.

The protein localises to the cytoplasm. In terms of biological role, together with the chaperonin GroEL, plays an essential role in assisting protein folding. The GroEL-GroES system forms a nano-cage that allows encapsulation of the non-native substrate proteins and provides a physical environment optimized to promote and accelerate protein folding. GroES binds to the apical surface of the GroEL ring, thereby capping the opening of the GroEL channel. This chain is Co-chaperonin GroES, found in Synechococcus sp. (strain CC9902).